A 165-amino-acid polypeptide reads, in one-letter code: MANPSKRIINKKSKQASISSILNFFFFYIMEYFVAVDNETSLGVFTSMEQCEETMKQYPGLHYVVFKYMCPADAENTDVVYLIPSLTLHTPMFVDHCPNRTKQARHVLKKINLVFEEESIENWKVSVNTVFPHVHNRLTAPKLSIDEANEAVEKFLIQAGRLMSL.

The chain crosses the membrane as a helical span at residues 16-36; the sequence is ASISSILNFFFFYIMEYFVAV.

It belongs to the asfivirus F165R family.

It is found in the host membrane. This is an uncharacterized protein from African swine fever virus (isolate Tick/Malawi/Lil 20-1/1983) (ASFV).